The following is a 369-amino-acid chain: Forkhead box protein I2-A (369 aa).

Residues R124 to K218 constitute a DNA-binding region (fork-head). Residues R215–A252 form a disordered region.

As to expression, localized to the animal hemisphere of early cleavage stage embryos. Zygotic expression is restricted to the dorsal part of the epibranchial placodes of the head within a region located near the tip of the first, second and third visceral pouch.

Its subcellular location is the nucleus. Possible transcriptional activator. This Xenopus laevis (African clawed frog) protein is Forkhead box protein I2-A (foxi2-a).